An 869-amino-acid chain; its full sequence is Probable inorganic carbon transporter subunit DabA (869 aa).

The disordered stretch occupies residues 1–32 (MSTATLEQRAKRGEAPRANDAGHCAHPADGAR). A compositionally biased stretch (basic and acidic residues) spans 8-17 (QRAKRGEAPR). Positions 376, 378, 555, and 570 each coordinate Zn(2+).

Belongs to the inorganic carbon transporter (TC 9.A.2) DabA family. Forms a complex with DabB. Requires Zn(2+) as cofactor.

The protein resides in the cell inner membrane. Its function is as follows. Part of an energy-coupled inorganic carbon pump. The chain is Probable inorganic carbon transporter subunit DabA from Burkholderia multivorans (strain ATCC 17616 / 249).